The chain runs to 310 residues: ADP-L-glycero-D-manno-heptose-6-epimerase (310 aa).

NADP(+) is bound by residues 10-11, 31-32, lysine 38, lysine 53, 75-79, and asparagine 92; these read FI, DN, and EGACS. The active-site Proton acceptor is tyrosine 140. An NADP(+)-binding site is contributed by lysine 144. Asparagine 169 contributes to the substrate binding site. Residues valine 170 and lysine 178 each contribute to the NADP(+) site. Residue lysine 178 is the Proton acceptor of the active site. Residues serine 180, histidine 187, 201 to 204, arginine 209, and tyrosine 272 each bind substrate; that span reads FEGS.

The protein belongs to the NAD(P)-dependent epimerase/dehydratase family. HldD subfamily. As to quaternary structure, homopentamer. The cofactor is NADP(+).

The catalysed reaction is ADP-D-glycero-beta-D-manno-heptose = ADP-L-glycero-beta-D-manno-heptose. It functions in the pathway nucleotide-sugar biosynthesis; ADP-L-glycero-beta-D-manno-heptose biosynthesis; ADP-L-glycero-beta-D-manno-heptose from D-glycero-beta-D-manno-heptose 7-phosphate: step 4/4. Catalyzes the interconversion between ADP-D-glycero-beta-D-manno-heptose and ADP-L-glycero-beta-D-manno-heptose via an epimerization at carbon 6 of the heptose. The protein is ADP-L-glycero-D-manno-heptose-6-epimerase of Salmonella heidelberg (strain SL476).